Here is a 534-residue protein sequence, read N- to C-terminus: UDP-glucuronosyltransferase 1A4 (534 aa).

The first 28 residues, 1–28 (MARGLQVPLPRLATGLLLLLSVQPWAES), serve as a signal peptide directing secretion. Residues N119, N142, N296, and N348 are each glycosylated (N-linked (GlcNAc...) asparagine). A helical transmembrane segment spans residues 492-508 (VIGFLLAVVLTVAFITF).

This sequence belongs to the UDP-glycosyltransferase family. Homodimer. Homooligomer. Interacts with UGT1A1, UGT1A3, UGT1A6, UGT1A7, UGT1A8, UGT1A9 and UGT1A10 to form heterodimers. Isoform 1 interacts with isoform 2/i2 suggesting that oligomerization is involved in negative regulation of transferase activity by isoform 2. Isoform 1 also interacts with respective i2 isoforms of UGT1A1, UGT1A3, UGT1A6, UGT1A7, UGT1A8, UGT1A9 and UGT1A10. As to expression, expressed in liver. Expressed in kidney, colon and small intestine. Not expressed in esophagus. Not expressed in skin. In terms of tissue distribution, expressed in liver, kidney, colon, esophagus and small intestine.

The protein localises to the endoplasmic reticulum membrane. It catalyses the reaction glucuronate acceptor + UDP-alpha-D-glucuronate = acceptor beta-D-glucuronoside + UDP + H(+). The enzyme catalyses calcidiol + UDP-alpha-D-glucuronate = calcidiol 25-O-(beta-D-glucuronide) + UDP + H(+). The catalysed reaction is calcidiol + UDP-alpha-D-glucuronate = calcidiol 3-O-(beta-D-glucuronide) + UDP + H(+). It carries out the reaction calcitriol + UDP-alpha-D-glucuronate = calcitriol 25-O-(beta-D-glucuronide) + UDP + H(+). It catalyses the reaction (5Z,8Z,11Z,14Z)-eicosatetraenoate + UDP-alpha-D-glucuronate = O-[(5Z),(8Z),(11Z),(14Z)-eicosatetraenoyl]-beta-D-glucuronate + UDP. The enzyme catalyses 15-hydroxy-(5Z,8Z,11Z,13E)-eicosatetraenoate + UDP-alpha-D-glucuronate = 15-O-(beta-D-glucuronosyl)-(5Z,8Z,11Z,14Z)-eicosatetraenoate + UDP + H(+). The catalysed reaction is 20-hydroxy-(5Z,8Z,11Z,14Z)-eicosatetraenoate + UDP-alpha-D-glucuronate = 20-O-(beta-D-glucuronosyl)-(5Z,8Z,11Z,14Z)-eicosatetraenoate + UDP + H(+). UDP-glucuronosyltransferase (UGT) that catalyzes phase II biotransformation reactions in which lipophilic substrates are conjugated with glucuronic acid to increase the metabolite's water solubility, thereby facilitating excretion into either the urine or bile. Essential for the elimination and detoxification of drugs, xenobiotics and endogenous compounds. Involved in the glucuronidation of calcidiol, which is the major circulating form of vitamin D3 essential for the regulation of calcium and phosphate homeostasis. Also glucuronidates the biologically active form of vitamin D3, calcitriol, probably leading to its biliary transport and intestinal reabsorption. Involved in the glucuronidation of arachidonic acid (AA) and AA-derived eicosanoids including 15-HETE, 20-HETE and PGB1. Its function is as follows. Lacks UDP-glucuronosyltransferase (UGT) activity but acts as a negative regulator of isoform 1. The chain is UDP-glucuronosyltransferase 1A4 from Homo sapiens (Human).